A 456-amino-acid polypeptide reads, in one-letter code: Adenylosuccinate lyase (456 aa).

N(6)-(1,2-dicarboxyethyl)-AMP contacts are provided by residues 15 to 16, 90 to 92, and 122 to 123; these read RY, NHD, and TS. The active-site Proton donor/acceptor is the histidine 171. Glutamine 247 provides a ligand contact to N(6)-(1,2-dicarboxyethyl)-AMP. Serine 295 functions as the Proton donor/acceptor in the catalytic mechanism. Residues serine 296, 301–303, asparagine 309, arginine 335, and 340–344 each bind N(6)-(1,2-dicarboxyethyl)-AMP; these read KVN and STVLR.

This sequence belongs to the lyase 1 family. Adenylosuccinate lyase subfamily. As to quaternary structure, homotetramer. Residues from neighboring subunits contribute catalytic and substrate-binding residues to each active site.

The enzyme catalyses N(6)-(1,2-dicarboxyethyl)-AMP = fumarate + AMP. The catalysed reaction is (2S)-2-[5-amino-1-(5-phospho-beta-D-ribosyl)imidazole-4-carboxamido]succinate = 5-amino-1-(5-phospho-beta-D-ribosyl)imidazole-4-carboxamide + fumarate. It functions in the pathway purine metabolism; AMP biosynthesis via de novo pathway; AMP from IMP: step 2/2. The protein operates within purine metabolism; IMP biosynthesis via de novo pathway; 5-amino-1-(5-phospho-D-ribosyl)imidazole-4-carboxamide from 5-amino-1-(5-phospho-D-ribosyl)imidazole-4-carboxylate: step 2/2. In terms of biological role, catalyzes two reactions in de novo purine nucleotide biosynthesis. Catalyzes the breakdown of 5-aminoimidazole- (N-succinylocarboxamide) ribotide (SAICAR or 2-[5-amino-1-(5-phospho-beta-D-ribosyl)imidazole-4-carboxamido]succinate) to 5-aminoimidazole-4-carboxamide ribotide (AICAR or 5-amino-1-(5-phospho-beta-D-ribosyl)imidazole-4-carboxamide) and fumarate, and of adenylosuccinate (ADS or N(6)-(1,2-dicarboxyethyl)-AMP) to adenosine monophosphate (AMP) and fumarate. In Haemophilus influenzae (strain ATCC 51907 / DSM 11121 / KW20 / Rd), this protein is Adenylosuccinate lyase (purB).